A 380-amino-acid chain; its full sequence is Acyl-coenzyme A diphosphatase SCS3 (380 aa).

At 1 to 7 (MSSKWFN) the chain is on the cytoplasmic side. The chain crosses the membrane as a helical span at residues 8 to 28 (AIHLLVCPLTVLVGYLMNAYG). Residues 29–43 (YGAALQATLNKDGLV) are Lumenal-facing. The helical transmembrane segment at 44–64 (NAMLVKKGWFWTSLVGWWCII) threads the bilayer. The Cytoplasmic segment spans residues 65–88 (RYRAVPGATGRDRRHIVQSFKRYA). A helical membrane pass occupies residues 89–109 (ILTVWWYVFTQGIWFGVGPIM). The Lumenal portion of the chain corresponds to 110-233 (DLVFVYTGGH…GHWAGGHDPS (124 aa)). The helical transmembrane segment at 234 to 254 (GHVFLATLMCMFLLGELRVFG) threads the bilayer. Histidine 235 is a catalytic residue. At 255-325 (RRALAHLYAQ…LTRCIACDHP (71 aa)) the chain is on the cytoplasmic side. The chain crosses the membrane as a helical span at residues 326–346 (VIILLTLLVTWLWQLLLTAVA). Residues 347–356 (SRFHTVREHM) lie on the Lumenal side of the membrane. The active site involves histidine 350. A helical transmembrane segment spans residues 357-377 (SGLLAAYIVTGLVYARDAAAL). At 378-380 (RPV) the chain is on the cytoplasmic side.

This sequence belongs to the FIT family. Fungal FIT2B/SCS3 subfamily.

Its subcellular location is the endoplasmic reticulum membrane. It catalyses the reaction an acyl-CoA + H2O = an acyl-4'-phosphopantetheine + adenosine 3',5'-bisphosphate + 2 H(+). The catalysed reaction is (9Z)-octadecenoyl-CoA + H2O = S-(9Z-octadecenoyl)-4'-phosphopantetheine + adenosine 3',5'-bisphosphate + 2 H(+). The enzyme catalyses (5Z,8Z,11Z,14Z)-eicosatetraenoyl-CoA + H2O = S-(5Z,8Z,11Z,14Z-eicosatetraenoyl)-4'-phosphopantetheine + adenosine 3',5'-bisphosphate + 2 H(+). It carries out the reaction hexadecanoyl-CoA + H2O = S-hexadecanoyl-4'-phosphopantetheine + adenosine 3',5'-bisphosphate + 2 H(+). Its function is as follows. Fatty acyl-coenzyme A (CoA) diphosphatase that hydrolyzes fatty acyl-CoA to yield acyl-4'-phosphopantetheine and adenosine 3',5'-bisphosphate. Preferentially hydrolyzes unsaturated long-chain acyl-CoA substrates in the endoplasmic reticulum (ER) lumen. This catalytic activity is required for maintaining ER structure and for lipid droplets (LDs) biogenesis, which are lipid storage organelles involved in maintaining lipid and energy homeostasis. May directly bind to diacylglycerol (DAGs) and triacylglycerol, which is also important for LD biogenesis. May support directional budding of nacent LDs from the ER into the cytosol by reducing DAG levels at sites of LD formation. May play a role in the regulation of cell morphology and cytoskeletal organization. Involved in phospholipid biosynthesis. The chain is Acyl-coenzyme A diphosphatase SCS3 from Saccharomyces cerevisiae (strain ATCC 204508 / S288c) (Baker's yeast).